Reading from the N-terminus, the 1256-residue chain is Cohesin subunit SA-3 (1256 aa).

Residues 1-22 (MPTLWSPSTQHHGSSSGSMSSP) show a composition bias toward low complexity. Positions 1–110 (MPTLWSPSTQ…GGNDKNKSVP (110 aa)) are disordered. Positions 72–83 (RNVRKRAAKRPP) are enriched in basic residues. In terms of domain architecture, SCD spans 324–409 (FVHRYRDILP…NRFKDRMVSM (86 aa)). Disordered stretches follow at residues 1096–1169 (RRLQ…GPEL) and 1230–1256 (KLLHSPSSPSEHGLDLLDTTELNMEDF). Polar residues predominate over residues 1113–1125 (NSGPTTPTLTSTA). Residues 1126–1140 (VKRRQSPRTVGKRQK) are compositionally biased toward basic residues. The span at 1144 to 1166 (GPGPGPGPGPGPGPGPGPGPGPG) shows a compositional bias: pro residues. Phosphoserine is present on S1234.

Belongs to the SCC3 family. As to quaternary structure, component of the meiosis-specific cohesin complex, which also contains the SMC1 (SMC1A or SMC1B) and SMC3 heterodimer. Such complex likely contains RAD21, or the meiosis-specific related protein REC8. Interacts with CCDC79/TERB1; recruiting cohesin to telomeres to develop structural rigidity. In terms of processing, phosphorylated. Testis specific.

The protein localises to the nucleus. The protein resides in the chromosome. In terms of biological role, meiosis specific component of cohesin complex. The cohesin complex is required for the cohesion of sister chromatids after DNA replication. The cohesin complex apparently forms a large proteinaceous ring within which sister chromatids can be trapped. At anaphase, the complex is cleaved and dissociates from chromatin, allowing sister chromatids to segregate. The meiosis-specific cohesin complex probably replaces mitosis specific cohesin complex when it dissociates from chromatin during prophase I. The chain is Cohesin subunit SA-3 (Stag3) from Rattus norvegicus (Rat).